Consider the following 124-residue polypeptide: Orexigenic neuropeptide QRFP (124 aa).

The first 17 residues, 1–17 (MRCLCSWLCLLLPLSAC), serve as a signal peptide directing secretion. A propeptide spanning residues 18 to 79 (FPLLDRRGPT…REHTGFRLGR (62 aa)) is cleaved from the precursor. A disordered region spans residues 63-100 (KEQQASRREHTGFRLGRQDSGSEATGFLPTDSEKASGP). At glutamine 80 the chain carries Pyrrolidone carboxylic acid. A Phenylalanine amide modification is found at phenylalanine 122.

It belongs to the RFamide neuropeptide family. Ligand for the G-protein coupled receptor QRFPR/GPR103. As to expression, expressed in the brain with highest expression levels in the hypothalamus and optic nerve. Also expressed in the trachea and mammary gland.

The protein localises to the secreted. Its function is as follows. Stimulates feeding and grooming behavior, metabolic rate and locomotor activity and increases blood pressure. May have orexigenic activity. May promote aldosterone secretion by the adrenal gland. This is Orexigenic neuropeptide QRFP (Qrfp) from Rattus norvegicus (Rat).